The chain runs to 184 residues: Thylakoid membrane protein slr0575 (184 aa).

2 consecutive transmembrane segments (helical) span residues 5–25 and 31–51; these read ISLA…GFVA and ATLN…GLAL.

The protein resides in the cellular thylakoid membrane. The protein is Thylakoid membrane protein slr0575 of Synechocystis sp. (strain ATCC 27184 / PCC 6803 / Kazusa).